A 262-amino-acid polypeptide reads, in one-letter code: Acyl-[acyl-carrier-protein]--UDP-N-acetylglucosamine O-acyltransferase (262 aa).

The protein belongs to the transferase hexapeptide repeat family. LpxA subfamily. As to quaternary structure, homotrimer.

The protein localises to the cytoplasm. It catalyses the reaction a (3R)-hydroxyacyl-[ACP] + UDP-N-acetyl-alpha-D-glucosamine = a UDP-3-O-[(3R)-3-hydroxyacyl]-N-acetyl-alpha-D-glucosamine + holo-[ACP]. The protein operates within glycolipid biosynthesis; lipid IV(A) biosynthesis; lipid IV(A) from (3R)-3-hydroxytetradecanoyl-[acyl-carrier-protein] and UDP-N-acetyl-alpha-D-glucosamine: step 1/6. Involved in the biosynthesis of lipid A, a phosphorylated glycolipid that anchors the lipopolysaccharide to the outer membrane of the cell. The sequence is that of Acyl-[acyl-carrier-protein]--UDP-N-acetylglucosamine O-acyltransferase from Haemophilus influenzae (strain ATCC 51907 / DSM 11121 / KW20 / Rd).